The following is a 215-amino-acid chain: MKYIKNNVLDLGSKDSYIKFNLSTVIDYIYNQIPLDYAEMNKIYKNICTELDDSPEFQSNLTEDDEYVYKFNEILKKCYDEQEMTKRKIFDPDFLNYKLINELHIYLTKKSPKKLVIKSINSIKLVNNEGVNTDINGTTNVDWKLHFWPEFTIQNSECLTLHDIIIACYKIKSHKFENWYELYCNMFTEFYVFQNSNDKNIWKEIFAVIKFDHGC.

This sequence belongs to the mimivirus L31/R44 family.

This is an uncharacterized protein from Acanthamoeba polyphaga (Amoeba).